A 289-amino-acid chain; its full sequence is Ribosomal RNA small subunit methyltransferase A (289 aa).

S-adenosyl-L-methionine is bound by residues N28, L30, G55, E77, D103, and N122.

It belongs to the class I-like SAM-binding methyltransferase superfamily. rRNA adenine N(6)-methyltransferase family. RsmA subfamily.

Its subcellular location is the cytoplasm. It carries out the reaction adenosine(1518)/adenosine(1519) in 16S rRNA + 4 S-adenosyl-L-methionine = N(6)-dimethyladenosine(1518)/N(6)-dimethyladenosine(1519) in 16S rRNA + 4 S-adenosyl-L-homocysteine + 4 H(+). Specifically dimethylates two adjacent adenosines (A1518 and A1519) in the loop of a conserved hairpin near the 3'-end of 16S rRNA in the 30S particle. May play a critical role in biogenesis of 30S subunits. In Jannaschia sp. (strain CCS1), this protein is Ribosomal RNA small subunit methyltransferase A.